We begin with the raw amino-acid sequence, 123 residues long: MPTINQLIRKERAKVSKRRKTPALQACPQRRGVCTRVYTTTPKKPNSALRKVARVRLTNGIEVTSYIPGEGHNLQEHSVVMIRGGRVKDLPGVRYHIIRGTLDTSGVSDRRQSRSKYGAKRPK.

D89 carries the 3-methylthioaspartic acid modification. The tract at residues 101–123 (TLDTSGVSDRRQSRSKYGAKRPK) is disordered. The segment covering 113 to 123 (SRSKYGAKRPK) has biased composition (basic residues).

This sequence belongs to the universal ribosomal protein uS12 family. As to quaternary structure, part of the 30S ribosomal subunit. Contacts proteins S8 and S17. May interact with IF1 in the 30S initiation complex.

Functionally, with S4 and S5 plays an important role in translational accuracy. In terms of biological role, interacts with and stabilizes bases of the 16S rRNA that are involved in tRNA selection in the A site and with the mRNA backbone. Located at the interface of the 30S and 50S subunits, it traverses the body of the 30S subunit contacting proteins on the other side and probably holding the rRNA structure together. The combined cluster of proteins S8, S12 and S17 appears to hold together the shoulder and platform of the 30S subunit. The protein is Small ribosomal subunit protein uS12 of Solidesulfovibrio magneticus (strain ATCC 700980 / DSM 13731 / RS-1) (Desulfovibrio magneticus).